We begin with the raw amino-acid sequence, 876 residues long: MVALSHLGSALQLGSLWGFPRSPFRLLGKRSLPEGVANGIEVYSTKINSKVTSRFAHNVVTTRVVNHADTAKEVSFDVELPKTAFITNFTLTIDGVIYPGNVKEKEVAKKQYEKAVSQGKTAGLVKASGRKLEKFTVSVNVAAGSKVTFELTYEELLKRHKGKYEMYLKVQPKQLVKHFEIEVDIFEPQGISMLDAEASFITNDLLGSALTKSFSGKKGHVSFKPSLDQQRPCPTCTDSLLNGDFTITYDVNRESPGNVQIVNGYFVHFFAPQGLPVVPKNVAFVIDISGSMAGRKLEQTKEALLRILEDMKKEDYLNFILFSGDVSTWKEHLVQATPENLQEARTFVKSMEDKGMTNINDGLLRGISMLNKAREEHRVPERSTSIVIMLTDGDANVGESRPEKIQENVRNAIGGKFPLYNLGFGNNLNYNFLENMALENHGFARRIYEDSDADLQLQGFYEEVANPLLTGVEVEYPENAILDLTQNTYQHFYDGSEIVVAGRLVDEDMNSFKADVKGHGATNDLTFTEEVDMKEMEKALQERDYIFGNYIERLWAYLTIEQLLEKRKNAHGEEKENLTARALDLSLKYHFVTPLTSMVVTKPEDNEDERAIADKPGEDAEASYQPPQNPYYYVDGDPHFIIQVPEKDDALCFNIDEAPGTVLRLIQDPVTGLTVNGQIIGDKRGSPDSKTKKTYFGKLGIANAQMDFQVEVTTEKVTLWNRAVQSTFSWLDTVTVMQDGLSMMINRKNMVVSFGDGVTFVVVLHQVWKKHPVHRDFLGFYVVDSHRMSAQTHGLLGQFFQPFDFKVSDIRPGSDPTKPDATLLVKNHQLIVTRGSQKDYRKDASIGTKVVRWFVYNNGEGLIDGVHTDYIVPNLF.

Positions Met-1–Gly-18 are cleaved as a signal peptide. Positions Phe-19–Ser-31 are excised as a propeptide. One can recognise a VIT domain in the interval Leu-26 to Glu-155. The N-linked (GlcNAc...) asparagine glycan is linked to Asn-88. Residues Asn-281 to Val-464 form the VWFA domain. Asn-577 carries an N-linked (GlcNAc...) asparagine glycan. At Asp-637 the chain carries Aspartate 1-(chondroitin 4-sulfate)-ester. The propeptide occupies Pro-638–Phe-876.

Belongs to the ITIH family. As to quaternary structure, I-alpha-I plasma protease inhibitors are assembled from one or two heavy chains (HC) and one light chain, bikunin. Pre-alpha-inhibitor (P-alpha-I) is composed of ITIH3/HC3 and bikunin. Heavy chains are linked to bikunin via chondroitin 4-sulfate esterified to the alpha-carboxyl of the C-terminal aspartate after propeptide cleavage.

The protein resides in the secreted. Functionally, may act as a carrier of hyaluronan in serum or as a binding protein between hyaluronan and other matrix protein, including those on cell surfaces in tissues to regulate the localization, synthesis and degradation of hyaluronan which are essential to cells undergoing biological processes. The sequence is that of Inter-alpha-trypsin inhibitor heavy chain H3 (ITIH3) from Pongo abelii (Sumatran orangutan).